The primary structure comprises 200 residues: uncharacterized protein (200 aa).

Low complexity-rich tracts occupy residues 1-13 and 28-44; these read MTSA…AAES and PSPA…AGPR. 2 disordered regions span residues 1–116 and 137–200; these read MTSA…GGPG and LPRD…SSFF. The span at 88 to 102 shows a compositional bias: basic residues; that stretch reads RCGRPRRRDPRRRRT. Residues 189-200 show a composition bias toward low complexity; it reads PSSSSGLLSSFF.

This is an uncharacterized protein from Homo sapiens (Human).